The chain runs to 436 residues: UPF0597 protein YhaM (436 aa).

This sequence belongs to the UPF0597 family.

The polypeptide is UPF0597 protein YhaM (Shigella flexneri serotype 5b (strain 8401)).